We begin with the raw amino-acid sequence, 246 residues long: Acetoacetate decarboxylase (246 aa).

K115 acts as the Schiff-base intermediate with acetoacetate in catalysis.

Belongs to the ADC family.

The catalysed reaction is acetoacetate + H(+) = acetone + CO2. Catalyzes the conversion of acetoacetate to acetone and carbon dioxide. This Clostridium beijerinckii (Clostridium MP) protein is Acetoacetate decarboxylase.